The chain runs to 312 residues: Ribonuclease Z (312 aa).

Positions 63, 65, 67, 68, 141, 212, and 270 each coordinate Zn(2+). Residue aspartate 67 is the Proton acceptor of the active site.

The protein belongs to the RNase Z family. In terms of assembly, homodimer. Zn(2+) is required as a cofactor.

It carries out the reaction Endonucleolytic cleavage of RNA, removing extra 3' nucleotides from tRNA precursor, generating 3' termini of tRNAs. A 3'-hydroxy group is left at the tRNA terminus and a 5'-phosphoryl group is left at the trailer molecule.. Functionally, zinc phosphodiesterase, which displays some tRNA 3'-processing endonuclease activity. Probably involved in tRNA maturation, by removing a 3'-trailer from precursor tRNA. The sequence is that of Ribonuclease Z from Lactobacillus helveticus (strain DPC 4571).